The primary structure comprises 1287 residues: DNA-directed RNA polymerase subunit beta (1287 aa).

The protein belongs to the RNA polymerase beta chain family. As to quaternary structure, the RNAP catalytic core consists of 2 alpha, 1 beta, 1 beta' and 1 omega subunit. When a sigma factor is associated with the core the holoenzyme is formed, which can initiate transcription.

It catalyses the reaction RNA(n) + a ribonucleoside 5'-triphosphate = RNA(n+1) + diphosphate. DNA-dependent RNA polymerase catalyzes the transcription of DNA into RNA using the four ribonucleoside triphosphates as substrates. The polypeptide is DNA-directed RNA polymerase subunit beta (Salinibacter ruber (strain DSM 13855 / M31)).